The sequence spans 190 residues: MSIKSDKWIRRMADQHGMIEPFEANQVKMAADGQKLISYGTSSYGYDIRCADEFKVFTNINSTIVDPKNFDPNSFVEVSGKGYCIIPPNSFALARTVEYFRIPRSVLTVCLGKSTYARCGIIVNVTPFEPEWEGYVTLEFSNTTPLPAKIYANEGVAQVLFFESDEECDVSYKDRAGKYQGQVGVTLPRP.

DCTP-binding positions include 113–118, 137–139, Gln-158, Tyr-172, and Gln-182; these read KSTYAR and TLE. Glu-139 functions as the Proton donor/acceptor in the catalytic mechanism.

It belongs to the dCTP deaminase family. As to quaternary structure, homotrimer.

The enzyme catalyses dCTP + H2O + H(+) = dUTP + NH4(+). It participates in pyrimidine metabolism; dUMP biosynthesis; dUMP from dCTP (dUTP route): step 1/2. Functionally, catalyzes the deamination of dCTP to dUTP. The chain is dCTP deaminase from Chromobacterium violaceum (strain ATCC 12472 / DSM 30191 / JCM 1249 / CCUG 213 / NBRC 12614 / NCIMB 9131 / NCTC 9757 / MK).